The chain runs to 609 residues: MRLLLSIAGLTTVVNALAVRADGNVTSSTAVATPTAWTGFPVPTEYTLPQDDHDFQERKEEIKLKRDTITYVPSIIGETSLFIGGSVGTQIVRQEQAKWIQDLTPVQQDAFREGNASLKAIQDHGGLKTLEDYKILYDGHWSGSVPGGIAQGQFNNFTSDLLFAMERLSTNPYVVRRLNPESDKIPFSVDANNVTHLTGTTLDTLFKSGSLFLADHSYQAEYTAQDGRYSAACQALFFLDQRSGQFLPLAIKTNVGSDLVYTPLDDPNDWLLAKIMYNVNDFFHGQIYHLANSHAVAEIVNLAAIRTLSSRHPVFGLLQRLMFQAYAIRATGEIALFNPGGLFDQSFAFSNVYARKFATDFYPTVAGPFQANYFEEDLRARGLLNASYGPELPHLPFHEDGHKIINAIRTFIGTFVDTVYESDKVLAEDSELQAWIAEANGPAKVINFPSAPLNTRKQLAEILTHMAWLTGVSHHVLNQGEPFTTSGVLPLHPASLYAPVPTAKGGIKDLLPWLPNEQKSVEQISLLARFNRPKIVENNETLLHMFDVKTLLSGTGEAVKAANEQFMIAMGTISKEISTRKFDDQGLSQGMPFIWTGMDPGVIPFYLSV.

The first 16 residues, 1 to 16 (MRLLLSIAGLTTVVNA), serve as a signal peptide directing secretion. 4 N-linked (GlcNAc...) asparagine glycosylation sites follow: Asn-24, Asn-115, Asn-156, and Asn-193. One can recognise a Lipoxygenase domain in the interval 117–609 (SLKAIQDHGG…PGVIPFYLSV (493 aa)). Mn(2+) is bound by residues His-289 and His-294. Residue Asn-385 is glycosylated (N-linked (GlcNAc...) asparagine). Mn(2+) is bound by residues His-474 and Asn-478. Residue Asn-539 is glycosylated (N-linked (GlcNAc...) asparagine). Val-609 serves as a coordination point for Mn(2+).

It belongs to the lipoxygenase family. Manganese lipoxygenase subfamily. Requires Mn(2+) as cofactor. In terms of processing, N- and O-glycosylated.

It localises to the secreted. The catalysed reaction is (9Z,12Z)-octadecadienoate + O2 = (9S)-hydroperoxy-(10E,12Z)-octadecadienoate. It carries out the reaction (9Z,12Z)-octadecadienoate + O2 = (11S)-hydroperoxy-(9Z,12Z)-octadecadienoate. The enzyme catalyses (9Z,12Z)-octadecadienoate + O2 = (13R)-hydroperoxy-(9Z,11E)-octadecadienoate. It catalyses the reaction (9Z,12Z,15Z)-octadecatrienoate + O2 = (11R)-hydroperoxy-(9Z,12Z,15Z)-octadecatrienoate. Functionally, lipoxygenase that metabolizes linoleic and alpha-linolenic acids to 9-, 11- and 13-hydroperoxy fatty acids. Oxidizes linoleic acid to mainly 9S- and 13R-HPODE and alpha-linolenic acid to 11R-HPOTrE. This chain is Manganese lipoxygenase, found in Colletotrichum gloeosporioides (strain Cg-14) (Anthracnose fungus).